Consider the following 188-residue polypeptide: Segregation and condensation protein B (188 aa).

The protein belongs to the ScpB family. As to quaternary structure, homodimer. Homodimerization may be required to stabilize the binding of ScpA to the Smc head domains. Component of a cohesin-like complex composed of ScpA, ScpB and the Smc homodimer, in which ScpA and ScpB bind to the head domain of Smc. The presence of the three proteins is required for the association of the complex with DNA.

The protein localises to the cytoplasm. Functionally, participates in chromosomal partition during cell division. May act via the formation of a condensin-like complex containing Smc and ScpA that pull DNA away from mid-cell into both cell halves. This Lactococcus lactis subsp. cremoris (strain MG1363) protein is Segregation and condensation protein B.